The following is a 290-amino-acid chain: 4-hydroxy-tetrahydrodipicolinate synthase (290 aa).

Position 46 (threonine 46) interacts with pyruvate. Tyrosine 134 serves as the catalytic Proton donor/acceptor. Residue lysine 163 is the Schiff-base intermediate with substrate of the active site. Valine 205 contributes to the pyruvate binding site.

Belongs to the DapA family. As to quaternary structure, homotetramer; dimer of dimers.

It localises to the cytoplasm. It carries out the reaction L-aspartate 4-semialdehyde + pyruvate = (2S,4S)-4-hydroxy-2,3,4,5-tetrahydrodipicolinate + H2O + H(+). The protein operates within amino-acid biosynthesis; L-lysine biosynthesis via DAP pathway; (S)-tetrahydrodipicolinate from L-aspartate: step 3/4. Functionally, catalyzes the condensation of (S)-aspartate-beta-semialdehyde [(S)-ASA] and pyruvate to 4-hydroxy-tetrahydrodipicolinate (HTPA). The polypeptide is 4-hydroxy-tetrahydrodipicolinate synthase (Bacillus subtilis (strain 168)).